Reading from the N-terminus, the 1729-residue chain is Zinc finger CCCH domain-containing protein 13 (1729 aa).

Disordered stretches follow at residues 1–40 (MSKIRRKVTVENTKTISESTSRRPSVFERLGPSTGSTTET) and 57–156 (CRFI…NGDI). Polar residues predominate over residues 10 to 23 (VENTKTISESTSRR). The C3H1-type zinc finger occupies 36–64 (STTETQCRNWLKTGSCLYGNTCRFIHGPS). A phosphoserine mark is found at Ser-64 and Ser-77. The span at 76–136 (RSPERPTGDL…IKIVKERTPE (61 aa)) shows a compositional bias: basic and acidic residues. The stretch at 162 to 196 (HELSLEMKRQKIQRELMKLEQENMDKREEIIIQKE) forms a coiled coil. A Glycyl lysine isopeptide (Lys-Gly) (interchain with G-Cter in SUMO2) cross-link involves residue Lys-179. Residues 182–193 (QENMDKREEIII) show a composition bias toward basic and acidic residues. Disordered stretches follow at residues 182–528 (QENM…IRDV) and 581–1527 (DVYQ…PISD). A phosphoserine mark is found at Ser-198, Ser-207, Ser-209, and Ser-211. Over residues 204–213 (SKLSPSPSLR) the composition is skewed to low complexity. Residues 214–224 (KSSKSPKRKSS) are compositionally biased toward basic residues. Position 242 is a phosphoserine (Ser-242). Positions 245 to 254 (LDQQRNSKGN) are enriched in polar residues. Position 263 is a phosphothreonine (Thr-263). Ser-265 carries the post-translational modification Phosphoserine. Basic and acidic residues predominate over residues 283–315 (KYKVKDRIEEKPRDGKDRGRDFEKQREKRDKPR). Phosphoserine is present on residues Ser-316, Ser-318, Ser-324, and Ser-327. The segment covering 321–345 (QHHSPLSSRHHSSSSQSGSSIQRHS) has biased composition (low complexity). Thr-353 and Thr-363 each carry phosphothreonine. Over residues 358 to 368 (YQRTLTPSLRR) the composition is skewed to polar residues. Residues Ser-369, Ser-371, and Ser-380 each carry the phosphoserine modification. Composition is skewed to basic and acidic residues over residues 393–528 (PMRE…IRDV) and 581–636 (DVYQ…EKGS). Over residues 639–654 (TRGSQMDSHSSGSNYH) the composition is skewed to polar residues. A compositionally biased stretch (basic and acidic residues) spans 655-701 (DSWETRSSYPERDRYPERDTRDPARDSSFERRHGERDRRDNRERDQR). Ser-704 bears the Phosphoserine mark. The stretch at 706-865 (IRHQGRSEEL…KERERQREWE (160 aa)) forms a coiled coil. Over residues 710–897 (GRSEELERDE…IPRDSHEERK (188 aa)) the composition is skewed to basic and acidic residues. A phosphoserine mark is found at Ser-907, Ser-909, Ser-913, Ser-921, Ser-924, Ser-929, Ser-949, Ser-951, and Ser-953. The segment covering 920 to 938 (HSPDSDTYHSGDDKNEKHR) has biased composition (basic and acidic residues). The span at 957–1035 (LTEDRQGRWK…GSDRAHDEKK (79 aa)) shows a compositional bias: basic and acidic residues. Phosphothreonine is present on Thr-958. A compositionally biased stretch (basic residues) spans 1036–1046 (KAKAPKKPVKK). The span at 1047–1065 (KKEEDVGVERGNLETHEDS) shows a compositional bias: basic and acidic residues. Residues Ser-1069, Ser-1086, Ser-1090, and Ser-1093 each carry the phosphoserine modification. The span at 1072–1086 (KGQKKKNIEKKRKRS) shows a compositional bias: basic residues. Position 1109 is a phosphothreonine (Thr-1109). Basic and acidic residues-rich tracts occupy residues 1114–1137 (IKEELADISTDKDGVLEDPLKKEN) and 1149–1159 (PDRTEGLEAEH). Composition is skewed to low complexity over residues 1160 to 1176 (TAATATPGSTPSPLSSL) and 1184 to 1218 (AAASTAATALASSAVSATTSATSSSSAATSNTNGS). Residues 1228-1253 (ARGEKVEVSHVTLEDTPHRKLVDQKR) show a composition bias toward basic and acidic residues. 4 positions are modified to phosphoserine: Ser-1256, Ser-1259, Ser-1273, and Ser-1275. Basic and acidic residues predominate over residues 1278–1288 (SAHRSGDDQGS). A Phosphoserine modification is found at Ser-1295. Basic and acidic residues-rich tracts occupy residues 1296–1351 (GSRD…DRQV) and 1359–1440 (DSRD…ERTF). Ser-1427, Ser-1443, Ser-1447, Ser-1467, Ser-1470, Ser-1499, and Ser-1526 each carry phosphoserine. Composition is skewed to basic and acidic residues over residues 1447–1482 (SGKRSEVKLESEHERDLEGSSRDSVALDKERMDRDL) and 1490–1499 (DVSKAERTES).

Belongs to the ZC3H13 family. In terms of assembly, component of the WMM complex, a N6-methyltransferase complex composed of a catalytic subcomplex, named MAC, and of an associated subcomplex, named MACOM. The MAC subcomplex is composed of METTL3 and METTL14. The MACOM subcomplex is composed of WTAP, ZC3H13, CBLL1/HAKAI, VIRMA, and, in some cases of RBM15 (RBM15 or RBM15B). Also a component of a MACOM-like complex, named WTAP complex, composed of WTAP, ZC3H13, CBLL1/HAKAI, VIRMA, RBM15, BCLAF1 and THRAP3.

The protein localises to the nucleus speckle. Its subcellular location is the nucleus. It is found in the nucleoplasm. In terms of biological role, associated component of the WMM complex, a complex that mediates N6-methyladenosine (m6A) methylation of RNAs, a modification that plays a role in the efficiency of mRNA splicing and RNA processing. Acts as a key regulator of m6A methylation by promoting m6A methylation of mRNAs at the 3'-UTR. Controls embryonic stem cells (ESCs) pluripotency via its role in m6A methylation. In the WMM complex, anchors component of the MACOM subcomplex in the nucleus. Also required for bridging WTAP to the RNA-binding component RBM15 (RBM15 or RBM15B). The chain is Zinc finger CCCH domain-containing protein 13 from Mus musculus (Mouse).